The following is a 276-amino-acid chain: NH(3)-dependent NAD(+) synthetase (276 aa).

43-50 (GISGGVDS) is a binding site for ATP. Asp-49 provides a ligand contact to Mg(2+). Residue Arg-146 participates in deamido-NAD(+) binding. Residue Thr-166 coordinates ATP. Residue Glu-171 participates in Mg(2+) binding. 2 residues coordinate deamido-NAD(+): Lys-179 and Asp-186. ATP contacts are provided by Lys-195 and Thr-217. A deamido-NAD(+)-binding site is contributed by 266–267 (HK).

The protein belongs to the NAD synthetase family. As to quaternary structure, homodimer.

It catalyses the reaction deamido-NAD(+) + NH4(+) + ATP = AMP + diphosphate + NAD(+) + H(+). It participates in cofactor biosynthesis; NAD(+) biosynthesis; NAD(+) from deamido-NAD(+) (ammonia route): step 1/1. Its function is as follows. Catalyzes the ATP-dependent amidation of deamido-NAD to form NAD. Uses ammonia as a nitrogen source. This is NH(3)-dependent NAD(+) synthetase from Shewanella frigidimarina (strain NCIMB 400).